The chain runs to 210 residues: MKKEIASHLLEIGAVFLQPNDPFTWSSGMKSPIYCDNRLTLSYPKVRQAIAAGLEELIKEHFPTVEVIAGTATAGIAHAAWVSDRMNLPMCYVRSKAKGHGKGNQIEGKAEKGQKVVVVEDLISTGGSAITCVEALREAGCEVLGIVSIFTYELEAGKEKLAAANVASYSLSDYSTLTQVAEEKGMIGQAEMKKLQEWRKNPADEAWITA.

5-phospho-alpha-D-ribose 1-diphosphate contacts are provided by residues R94, K98, H100, and 120-128 (EDLISTGGS). S124 contacts orotate.

It belongs to the purine/pyrimidine phosphoribosyltransferase family. PyrE subfamily. Homodimer. It depends on Mg(2+) as a cofactor.

It catalyses the reaction orotidine 5'-phosphate + diphosphate = orotate + 5-phospho-alpha-D-ribose 1-diphosphate. It functions in the pathway pyrimidine metabolism; UMP biosynthesis via de novo pathway; UMP from orotate: step 1/2. Functionally, catalyzes the transfer of a ribosyl phosphate group from 5-phosphoribose 1-diphosphate to orotate, leading to the formation of orotidine monophosphate (OMP). The sequence is that of Orotate phosphoribosyltransferase from Bacillus cytotoxicus (strain DSM 22905 / CIP 110041 / 391-98 / NVH 391-98).